A 166-amino-acid chain; its full sequence is MSQFSHYNEDGLPKMVDISSKSATSRTATAECRVRISPRLYEAIHEQSLKKGNPLPVAQVAGIMAAKKTAEWIPMCHPILIQGTDLSFKYEPVKDGYMLVIGATVTVDGNTGVEMEALTAVTAAALTFYDMCKAVDKSMVIEETLLVKKTGGKNGDFYHPRREKMD.

Residues 75–77 (MCH) and 115–116 (ME) each bind substrate. Residue Asp-130 is part of the active site.

This sequence belongs to the MoaC family. As to quaternary structure, homohexamer; trimer of dimers.

It catalyses the reaction (8S)-3',8-cyclo-7,8-dihydroguanosine 5'-triphosphate = cyclic pyranopterin phosphate + diphosphate. The protein operates within cofactor biosynthesis; molybdopterin biosynthesis. Catalyzes the conversion of (8S)-3',8-cyclo-7,8-dihydroguanosine 5'-triphosphate to cyclic pyranopterin monophosphate (cPMP). In Shouchella clausii (strain KSM-K16) (Alkalihalobacillus clausii), this protein is Cyclic pyranopterin monophosphate synthase.